The following is a 229-amino-acid chain: 7-cyano-7-deazaguanine synthase (229 aa).

Residue 9–19 (LSGGLDSTTVL) participates in ATP binding. 4 residues coordinate Zn(2+): Cys-192, Cys-202, Cys-205, and Cys-208.

This sequence belongs to the QueC family. It depends on Zn(2+) as a cofactor.

It carries out the reaction 7-carboxy-7-deazaguanine + NH4(+) + ATP = 7-cyano-7-deazaguanine + ADP + phosphate + H2O + H(+). It participates in purine metabolism; 7-cyano-7-deazaguanine biosynthesis. Its function is as follows. Catalyzes the ATP-dependent conversion of 7-carboxy-7-deazaguanine (CDG) to 7-cyano-7-deazaguanine (preQ(0)). This chain is 7-cyano-7-deazaguanine synthase, found in Kineococcus radiotolerans (strain ATCC BAA-149 / DSM 14245 / SRS30216).